The primary structure comprises 239 residues: DNA repair protein RecO (239 aa).

It belongs to the RecO family.

Functionally, involved in DNA repair and RecF pathway recombination. This chain is DNA repair protein RecO, found in Aromatoleum aromaticum (strain DSM 19018 / LMG 30748 / EbN1) (Azoarcus sp. (strain EbN1)).